The following is a 389-amino-acid chain: Probable zinc transporter zip2 (389 aa).

7 consecutive transmembrane segments (helical) span residues 6 to 26 (GWILSLSINAFCVFGASGIYL), 48 to 68 (LVTGLATSSGILLYSSWASVM), 88 to 108 (VFQFCAFFFGGIVFYIFNHFL), 267 to 289 (VLVAMSIHNIVEGFTIAYPLYLA), 305 to 325 (SCSLPLGSLIAFLVMEAGGIG), 329 to 349 (FLNFLYGIIFAGTAGMMLILS), and 368 to 388 (HSFICFTIGILFTLFLEIFDS).

The protein belongs to the ZIP transporter (TC 2.A.5) family.

The protein resides in the endoplasmic reticulum membrane. Probable zinc transporter that may mediate zinc remobilization from the endoplasmic reticulum under zinc limitation. This chain is Probable zinc transporter zip2 (zip2), found in Schizosaccharomyces pombe (strain 972 / ATCC 24843) (Fission yeast).